A 157-amino-acid polypeptide reads, in one-letter code: Transcription elongation factor GreA (157 aa).

The protein belongs to the GreA/GreB family.

In terms of biological role, necessary for efficient RNA polymerase transcription elongation past template-encoded arresting sites. The arresting sites in DNA have the property of trapping a certain fraction of elongating RNA polymerases that pass through, resulting in locked ternary complexes. Cleavage of the nascent transcript by cleavage factors such as GreA or GreB allows the resumption of elongation from the new 3'terminus. GreA releases sequences of 2 to 3 nucleotides. This is Transcription elongation factor GreA from Azorhizobium caulinodans (strain ATCC 43989 / DSM 5975 / JCM 20966 / LMG 6465 / NBRC 14845 / NCIMB 13405 / ORS 571).